The chain runs to 604 residues: Protein CBFA2T1 (604 aa).

The tract at residues 32–114 is disordered; it reads TEKHSTMPDS…SSSSLANQQL (83 aa). Serine 41 carries the phosphoserine modification. Residues 63–86 are compositionally biased toward polar residues; sequence QGAPRTSSFTPTTLTNGTSHSPTA. A compositionally biased stretch (low complexity) spans 95-114; the sequence is NGFSNGPSSSSSSSLANQQL. The TAFH domain maps to 120 to 215; the sequence is ARQLSKLKRF…NPAQYLAQHE (96 aa). Residues 230–298 are disordered; sequence SELLLDVNEN…LPHPTPPPPQ (69 aa). Basic and acidic residues predominate over residues 238 to 264; the sequence is ENGKRRTPDRTKENGFDREPLHSEHPS. The span at 271–285 shows a compositional bias: polar residues; that stretch reads SPGQRYSPNNGLSYQ. Pro residues predominate over residues 289–298; sequence LPHPTPPPPQ. Positions 337–383 are important for oligomerization; the sequence is QEEMIDHRLTDREWAEEWKHLDHLLNCIMDMVEKTRRSLTVLRRCQE. Residues 337–383 are nervy homology region 2 (NHR2); the sequence is QEEMIDHRLTDREWAEEWKHLDHLLNCIMDMVEKTRRSLTVLRRCQE. A disordered region spans residues 401 to 423; it reads DLKKGGGSSSSHSRQQSPVNPDP. Serine 417 carries the phosphoserine modification. A nervy homology region 3 (NHR3) region spans residues 443–492; the sequence is EEIWKKAEEAVNEVKRQAMTELQKAVSEAERKAHDMITTERAKMERTVAE. Zn(2+) is bound by residues cysteine 515, cysteine 518, cysteine 526, cysteine 529, cysteine 535, cysteine 539, histidine 547, and cysteine 551. Residues 515 to 551 form an MYND-type zinc finger; sequence CWNCGRKASETCSGCNTARYCGSFCQHKDWEKHHHIC. A compositionally biased stretch (polar residues) spans 557 to 576; the sequence is AQQQGDTPAVSSSVTPNSGA. Positions 557–604 are disordered; sequence AQQQGDTPAVSSSVTPNSGAGSPMDTPPAATPRSTTPGTPSTIETTPR. Low complexity predominate over residues 587 to 604; that stretch reads TPRSTTPGTPSTIETTPR.

It belongs to the CBFA2T family. In terms of assembly, homooligomer. Homotetramerization is mediated by nervy homology region 2 (NRH2). Can interact with CBFA2T2 and CBFA2T3; heterotetramerization between members of the CBFA2T family is proposed. Interacts with TCF12, SIN3A, HDAC1, HDAC2, HDAC3, NCOR1, NCOR2. Interacts with ATN1 (via its N-terminus); the interaction enhances the transcriptional repression. Interacts (via its N-terminus) with ZBTB16; the interaction increases the transcription repression activity of ZBTB16. AML1-MTG8/ETO fusion protein interacts with CBFB. AML1-MTG8/ETO is part of a stable transcription factor complex AETFC in leukemic cells; AETFC formation seems to be involved in recruitment of EP300. AML1-MTG8/ETO nervy homology region 2-mediated oligomerization is proposed to be homotypic, required for AML1-MTG8/ETO-mediated transformation of primary hematopoietic cells and is required for AML1-MTG8/ETO interaction with TCF12. In terms of tissue distribution, most abundantly expressed in brain. Lower levels in lung, heart, testis and ovary.

Its subcellular location is the nucleus. Transcriptional corepressor which facilitates transcriptional repression via its association with DNA-binding transcription factors and recruitment of other corepressors and histone-modifying enzymes. Can repress the expression of MMP7 in a ZBTB33-dependent manner. Can repress transactivation mediated by TCF12. Acts as a negative regulator of adipogenesis. The AML1-MTG8/ETO fusion protein frequently found in leukemic cells is involved in leukemogenesis and contributes to hematopoietic stem/progenitor cell self-renewal. This Homo sapiens (Human) protein is Protein CBFA2T1 (RUNX1T1).